A 256-amino-acid polypeptide reads, in one-letter code: Small ribosomal subunit protein eS1 (256 aa).

Residue Ala2 is modified to N-acetylalanine; partial.

It belongs to the eukaryotic ribosomal protein eS1 family. In terms of assembly, component of the small ribosomal subunit. Mature ribosomes consist of a small (40S) and a large (60S) subunit. The 40S subunit contains about 33 different proteins and 1 molecule of RNA (18S). The 60S subunit contains about 49 different proteins and 3 molecules of RNA (25S, 5.8S and 5S).

It is found in the cytoplasm. The chain is Small ribosomal subunit protein eS1 from Komagataella phaffii (strain GS115 / ATCC 20864) (Yeast).